We begin with the raw amino-acid sequence, 207 residues long: Transcriptional regulator YqjI (207 aa).

Residues 1-40 (MSHHHEGCCKHEGQPRHEGCCKGEKSEHEHCGHGHQHEHG) are compositionally biased toward basic and acidic residues. Positions 1 to 46 (MSHHHEGCCKHEGQPRHEGCCKGEKSEHEHCGHGHQHEHGQCCGGR) are disordered.

Oligomer (probable predominant form) and monomer.

Divalent metals such as nickel and iron have a similar negative effect on YqjI DNA-binding activity. Functionally, represses the expression of YqjH which is involved in iron homeostasis under excess nickel conditions. Also represses its own expression. This Escherichia coli (strain K12) protein is Transcriptional regulator YqjI (yqjI).